Here is a 206-residue protein sequence, read N- to C-terminus: Protein phosphatase inhibitor 2 (206 aa).

A disordered region spans residues 1–36 (MAASTASHRPIKGILKNKTSAASPPVVPSAEQPRPI). A2 bears the N-acetylalanine mark. The segment at 12-17 (KGILKN) is required for binding PPP1CC. The tract at residues 44–56 (KSQKWDEMNILAT) is required for binding the 'RVXF' binding groove of PPP1CC. A Phosphoserine; by ATM modification is found at S45. The residue at position 74 (T74) is a Phosphothreonine. Residues 75–143 (PYHNMIGDDE…EREKKRQFEM (69 aa)) are disordered. Residues 81–92 (GDDEDAYSDSEG) are compositionally biased toward acidic residues. S88 and S90 each carry phosphoserine. 2 positions are modified to phosphothreonine: T97 and T117. Positions 111-121 (SEPKYRTREQE) are enriched in basic and acidic residues. S122, S123, and S131 each carry phosphoserine. The segment covering 122-131 (SSGEEDNDLS) has biased composition (acidic residues). Basic and acidic residues predominate over residues 132–143 (PEEREKKRQFEM). The interval 148–151 (HYNE) is required for binding PPP1CC catalytic center, displacing metal ions and inhibition of PPP1CC catalytic activity. Residues 164 to 206 (KDLHDDDEDEEMAETADGDSMNVEESSQGSTTSDHLQHKSQSS) form a disordered region. Positions 168 to 180 (DDDEDEEMAETAD) are enriched in acidic residues. A compositionally biased stretch (polar residues) spans 186–206 (VEESSQGSTTSDHLQHKSQSS).

This sequence belongs to the protein phosphatase inhibitor 2 family. In terms of assembly, heterodimer with PP1. Phosphorylation on Ser-45 by ATM activates PP1 by dissociating the PP1-PPP1R2 complex. Phosphorylation on Thr-74 by GSK3 activates PP1 by dissociating the PP1-PPP1R2 complex.

Its function is as follows. Inhibitor of protein-phosphatase 1. The chain is Protein phosphatase inhibitor 2 (Ppp1r2) from Mus musculus (Mouse).